The following is a 189-amino-acid chain: MASGAGGSWGRSPPQSAVPTPWVTFLQPLSWAVPPAPPQPGRVKEDLLELMMLQNAQMHQLLLSRLVAGALQPRPASPCPQVYLEVPQEEPEEEEEEMDVREKGPLVFHHHYLPYLMPSPGALLPWPAPFFPTPACQPYLQDVPRIQHCPASREREVRAVPPPPPPSATGTVGADVPPASDYYDAESLL.

Residues 152 to 189 (SREREVRAVPPPPPPSATGTVGADVPPASDYYDAESLL) form a disordered region.

The polypeptide is Proline-rich protein 29 (PRR29) (Homo sapiens (Human)).